The primary structure comprises 151 residues: Small ribosomal subunit protein uS15 (151 aa).

The tract at residues 1-20 (MARLHSGKRGSSGSTKPLRT) is disordered.

This sequence belongs to the universal ribosomal protein uS15 family. In terms of assembly, part of the 30S ribosomal subunit.

This chain is Small ribosomal subunit protein uS15, found in Methanococcus vannielii (strain ATCC 35089 / DSM 1224 / JCM 13029 / OCM 148 / SB).